Reading from the N-terminus, the 301-residue chain is Protein phosphatase 1 regulatory subunit 3B (301 aa).

The short motif at 79-82 is the PP1-binding motif element; the sequence is RVSF. The 109-residue stretch at 142–250 folds into the CBM21 domain; the sequence is RNRLQAESVC…SNKGLNYRIV (109 aa).

As to quaternary structure, interacts with glycogen, PPP1CC catalytic subunit of PP1 and PYGL. Associates with glycogen particles. Forms complexes with debranching enzyme, glycogen phosphorylase, glycogen synthase and phosphorylase kinase which is necessary for its regulation of PP1 activity.

Functionally, acts as a glycogen-targeting subunit for phosphatase PP1. Facilitates interaction of the PP1 with enzymes of the glycogen metabolism and regulates its activity. Suppresses the rate at which PP1 dephosphorylates (inactivates) glycogen phosphorylase and enhances the rate at which it activates glycogen synthase and therefore limits glycogen breakdown. The polypeptide is Protein phosphatase 1 regulatory subunit 3B (ppp1r3b) (Xenopus tropicalis (Western clawed frog)).